Reading from the N-terminus, the 198-residue chain is Protein GrpE (198 aa).

The disordered stretch occupies residues 1 to 32; it reads MTTEKETATPADVEVASQEEQIDQTTEAQVEE.

Belongs to the GrpE family. Homodimer.

Its subcellular location is the cytoplasm. In terms of biological role, participates actively in the response to hyperosmotic and heat shock by preventing the aggregation of stress-denatured proteins, in association with DnaK and GrpE. It is the nucleotide exchange factor for DnaK and may function as a thermosensor. Unfolded proteins bind initially to DnaJ; upon interaction with the DnaJ-bound protein, DnaK hydrolyzes its bound ATP, resulting in the formation of a stable complex. GrpE releases ADP from DnaK; ATP binding to DnaK triggers the release of the substrate protein, thus completing the reaction cycle. Several rounds of ATP-dependent interactions between DnaJ, DnaK and GrpE are required for fully efficient folding. The polypeptide is Protein GrpE (Haemophilus ducreyi (strain 35000HP / ATCC 700724)).